We begin with the raw amino-acid sequence, 185 residues long: Ribosome-recycling factor (185 aa).

Belongs to the RRF family.

Its subcellular location is the cytoplasm. Its function is as follows. Responsible for the release of ribosomes from messenger RNA at the termination of protein biosynthesis. May increase the efficiency of translation by recycling ribosomes from one round of translation to another. The sequence is that of Ribosome-recycling factor from Campylobacter jejuni subsp. jejuni serotype O:2 (strain ATCC 700819 / NCTC 11168).